Here is a 132-residue protein sequence, read N- to C-terminus: Histone H2A.1 (132 aa).

Positions 1–21 (MSGGKGKAGTSEKASTSRSAK) are disordered. At serine 2 the chain carries N-acetylserine. Residues lysine 5 and lysine 7 each carry the N6-acetyllysine modification. Glutamine 105 is modified (N5-methylglutamine). Serine 129 carries the phosphoserine modification. Residues 129–130 (SQ) carry the [ST]-Q motif motif.

The protein belongs to the histone H2A family. The nucleosome is a histone octamer containing two molecules each of H2A, H2B, H3 and H4 assembled in one H3-H4 heterotetramer and two H2A-H2B heterodimers. The octamer wraps approximately 147 bp of DNA. Phosphorylated to form H2AS128ph (gamma-H2A) in response to DNA double-strand breaks (DSBs) generated by exogenous genotoxic agents and by stalled replication forks. Phosphorylation is dependent on the DNA damage checkpoint kinases MEC1/ATR and TEL1/ATM, spreads on either side of a detected DSB site and may mark the surrounding chromatin for recruitment of proteins required for DNA damage signaling and repair. Gamma-H2A is removed from the DNA prior to the strand invasion-primer extension step of the repair process and subsequently dephosphorylated. Dephosphorylation is necessary for efficient recovery from the DNA damage checkpoint. Post-translationally, acetylated by ESA1 to form H2AK4ac and H2AK7ac.

The protein resides in the nucleus. The protein localises to the chromosome. Functionally, core component of nucleosome which plays a central role in DNA double strand break (DSB) repair. Nucleosomes wrap and compact DNA into chromatin, limiting DNA accessibility to the cellular machineries which require DNA as a template. Histones thereby play a central role in transcription regulation, DNA repair, DNA replication and chromosomal stability. DNA accessibility is regulated via a complex set of post-translational modifications of histones, also called histone code, and nucleosome remodeling. In Candida albicans (strain SC5314 / ATCC MYA-2876) (Yeast), this protein is Histone H2A.1 (HTA1).